A 512-amino-acid chain; its full sequence is Maturase K (512 aa).

The protein belongs to the intron maturase 2 family. MatK subfamily.

It localises to the plastid. Its subcellular location is the chloroplast. Usually encoded in the trnK tRNA gene intron. Probably assists in splicing its own and other chloroplast group II introns. The sequence is that of Maturase K from Oenothera biennis (German evening primrose).